The primary structure comprises 388 residues: Processive diacylglycerol beta-glucosyltransferase (388 aa).

The protein belongs to the glycosyltransferase 28 family. UgtP subfamily.

It is found in the cell membrane. It catalyses the reaction a 1,2-diacyl-3-O-(beta-D-glucopyranosyl)-sn-glycerol + UDP-alpha-D-glucose = a 1,2-diacyl-3-O-(beta-D-Glc-(1-&gt;6)-beta-D-Glc)-sn-glycerol + UDP + H(+). The enzyme catalyses a 1,2-diacyl-3-O-(beta-D-Glc-(1-&gt;6)-beta-D-Glc)-sn-glycerol + UDP-alpha-D-glucose = a 1,2-diacyl-3-O-(beta-D-Glc-(1-&gt;6)-beta-D-Glc-(1-&gt;6)-beta-D-Glc)-sn-glycerol + UDP + H(+). It carries out the reaction a 1,2-diacyl-sn-glycerol + UDP-alpha-D-glucose = a 1,2-diacyl-3-O-(beta-D-glucopyranosyl)-sn-glycerol + UDP + H(+). It participates in glycolipid metabolism; diglucosyl-diacylglycerol biosynthesis. Functionally, processive glucosyltransferase involved in the biosynthesis of both the bilayer- and non-bilayer-forming membrane glucolipids. Is able to successively transfer up to three glucosyl residues to diacylglycerol (DAG), thereby catalyzing the formation of beta-monoglucosyl-DAG (3-O-(beta-D-glucopyranosyl)-1,2-diacyl-sn-glycerol), beta-diglucosyl-DAG (3-O-(beta-D-glucopyranosyl-beta-(1-&gt;6)-D-glucopyranosyl)-1,2-diacyl-sn-glycerol) and beta-triglucosyl-DAG (3-O-(beta-D-glucopyranosyl-beta-(1-&gt;6)-D-glucopyranosyl-beta-(1-&gt;6)-D-glucopyranosyl)-1,2-diacyl-sn-glycerol). Beta-diglucosyl-DAG is the predominant glycolipid found in Bacillales and is also used as a membrane anchor for lipoteichoic acid (LTA). In Bacillus cereus (strain ATCC 14579 / DSM 31 / CCUG 7414 / JCM 2152 / NBRC 15305 / NCIMB 9373 / NCTC 2599 / NRRL B-3711), this protein is Processive diacylglycerol beta-glucosyltransferase.